Consider the following 249-residue polypeptide: 1-(5-phosphoribosyl)-5-[(5-phosphoribosylamino)methylideneamino] imidazole-4-carboxamide isomerase (249 aa).

Asp-8 acts as the Proton acceptor in catalysis. Asp-130 serves as the catalytic Proton donor.

This sequence belongs to the HisA/HisF family.

It is found in the cytoplasm. The enzyme catalyses 1-(5-phospho-beta-D-ribosyl)-5-[(5-phospho-beta-D-ribosylamino)methylideneamino]imidazole-4-carboxamide = 5-[(5-phospho-1-deoxy-D-ribulos-1-ylimino)methylamino]-1-(5-phospho-beta-D-ribosyl)imidazole-4-carboxamide. The protein operates within amino-acid biosynthesis; L-histidine biosynthesis; L-histidine from 5-phospho-alpha-D-ribose 1-diphosphate: step 4/9. This is 1-(5-phosphoribosyl)-5-[(5-phosphoribosylamino)methylideneamino] imidazole-4-carboxamide isomerase from Chromohalobacter salexigens (strain ATCC BAA-138 / DSM 3043 / CIP 106854 / NCIMB 13768 / 1H11).